Here is an 86-residue protein sequence, read N- to C-terminus: MRCVVLFMVSCLLIVLLINHFEEVEAQKWKECNLRDIFPGKCEHDANAKLRCKEDIAKNFRPSRPFECDCQTFDQGRICYCKKCLV.

An N-terminal signal peptide occupies residues 1–26; that stretch reads MRCVVLFMVSCLLIVLLINHFEEVEA. Disulfide bonds link cysteine 32/cysteine 84, cysteine 42/cysteine 70, cysteine 52/cysteine 79, and cysteine 68/cysteine 81.

Belongs to the DEFL family.

It localises to the secreted. Its function is as follows. Involved in male-mediated self-incompatibility. This chain is Defensin-like SRCA-homolog protein (SCR37), found in Arabidopsis lyrata (Lyre-leaved rock-cress).